Here is a 380-residue protein sequence, read N- to C-terminus: Cytochrome b (380 aa).

The next 4 helical transmembrane spans lie at 34-54 (FGSLLGICLITQIITGLLLAM), 78-99 (WLIRHLHANGASFFFICIYLHI), 114-134 (WNIGVILLLTLMATAFVGYVL), and 179-199 (LFALHFLLPFVIAGLTLVHLT). H84 and H98 together coordinate heme b. 2 residues coordinate heme b: H183 and H197. H202 is a binding site for a ubiquinone. Transmembrane regions (helical) follow at residues 227 to 247 (IKDLLGFVLMLTPLIAMALFA), 289 to 309 (LGGVLALAASVLVLFLIPLLH), 321 to 341 (LSQMLFWTLVADLLILTWVGS), and 348 to 368 (FIIIGQLASLAYFTIILVLFP).

Belongs to the cytochrome b family. In terms of assembly, the cytochrome bc1 complex contains 11 subunits: 3 respiratory subunits (MT-CYB, CYC1 and UQCRFS1), 2 core proteins (UQCRC1 and UQCRC2) and 6 low-molecular weight proteins (UQCRH/QCR6, UQCRB/QCR7, UQCRQ/QCR8, UQCR10/QCR9, UQCR11/QCR10 and a cleavage product of UQCRFS1). This cytochrome bc1 complex then forms a dimer. Heme b serves as cofactor.

It localises to the mitochondrion inner membrane. Component of the ubiquinol-cytochrome c reductase complex (complex III or cytochrome b-c1 complex) that is part of the mitochondrial respiratory chain. The b-c1 complex mediates electron transfer from ubiquinol to cytochrome c. Contributes to the generation of a proton gradient across the mitochondrial membrane that is then used for ATP synthesis. The chain is Cytochrome b (MT-CYB) from Aphelocoma coerulescens (Florida scrub-jay).